The sequence spans 37 residues: Translationally-controlled tumor protein homolog (37 aa).

In terms of domain architecture, TCTP spans 1 to 37; it reads MKIFRDILTNAEVVXDNDKPMDVLDEIVYAXQGRYIE.

Belongs to the TCTP family. Monomer.

The protein localises to the cytoplasm. Functionally, binds calcium; exact function not known. The chain is Translationally-controlled tumor protein homolog from Trypanosoma brucei brucei.